Consider the following 757-residue polypeptide: Large ribosomal subunit protein mL102 (rPPR5) (757 aa).

The segment covering 39–55 (EETQTPANANPETQSPD) has biased composition (polar residues). The disordered stretch occupies residues 39 to 82 (EETQTPANANPETQSPDAKSETKKNLTSTETRPLRERFQRGKRQ). Residues 70 to 82 (RPLRERFQRGKRQ) are compositionally biased toward basic and acidic residues. PPR repeat units follow at residues 149 to 183 (DRDT…GVPW), 184 to 218 (DEDM…GVER), 219 to 253 (TIKS…GVEP), 254 to 288 (TRHT…GISP), 289 to 323 (DDAT…KIGP), 324 to 358 (SVVS…GIEP), 359 to 393 (NATT…HIAP), 395 to 429 (DNSI…NVPA), 430 to 464 (EAGH…EIIL), 473 to 507 (EPSA…GVQD), 510 to 541 (ALNN…GVPR), 542 to 576 (ESNA…GHVP), 577 to 611 (DSSL…NVGI), 614 to 648 (NMDL…GHTA), 651 to 680 (DSLL…DLSL), and 681 to 715 (EFSS…GSST).

Belongs to the PPR family. P subfamily. In terms of assembly, component of the mitochondrial ribosome large subunit.

The protein resides in the mitochondrion. The chain is Large ribosomal subunit protein mL102 (rPPR5) from Arabidopsis thaliana (Mouse-ear cress).